We begin with the raw amino-acid sequence, 1005 residues long: Protein TIC 214 (1005 aa).

A run of 6 helical transmembrane segments spans residues 25–45 (VGLY…LFLL), 67–87 (FFTG…HLAL), 91–111 (HTIL…SNSG), 131–151 (SFQL…SVLG), 177–197 (FVGW…VFVW), and 304–324 (LFSI…PLLY). 2 disordered regions span residues 457–481 (VEEG…EREE) and 767–833 (KKKK…KRKQ). The segment covering 783–810 (KQKKVKSKQKKVKSKQKKVKSKQKKVKS) has biased composition (basic residues). Positions 811 to 824 (KQNEIKSKQNEIKS) are enriched in basic and acidic residues.

Belongs to the TIC214 family. As to quaternary structure, part of the Tic complex.

It is found in the plastid. The protein localises to the chloroplast inner membrane. In terms of biological role, involved in protein precursor import into chloroplasts. May be part of an intermediate translocation complex acting as a protein-conducting channel at the inner envelope. In Oenothera berteroana (Bertero's evening primrose), this protein is Protein TIC 214.